A 330-amino-acid polypeptide reads, in one-letter code: Probable aldo-keto reductase 6 (330 aa).

The active-site Proton donor is the Tyr64. Substrate is bound at residue His132. 211-221 (SPLGRGFLGLP) lines the NADP(+) pocket.

The protein belongs to the aldo/keto reductase family.

The protein is Probable aldo-keto reductase 6 of Arabidopsis thaliana (Mouse-ear cress).